Here is a 330-residue protein sequence, read N- to C-terminus: Alpha/beta hydrolase domain-containing protein VTE7 (330 aa).

In terms of domain architecture, AB hydrolase-1 spans 84–315 (VVLLHCFDSS…GHLPHVENPK (232 aa)). Serine 157 acts as the Nucleophile in catalysis. Catalysis depends on charge relay system residues aspartate 279 and histidine 307.

The protein belongs to the AB hydrolase superfamily.

It is found in the plastid. Its subcellular location is the chloroplast envelope. In terms of biological role, hydrolase involved in tocopherol (vitamin E) biosynthesis. Releases prenyl alcohols from chlorophyll biosynthetic intermediates, which are then converted to the corresponding diphosphates for tocopherol biosynthesis. Provides most of the phytol from chlorophyll for tocopherol biosynthesis in seeds. In Arabidopsis thaliana (Mouse-ear cress), this protein is Alpha/beta hydrolase domain-containing protein VTE7.